Here is a 321-residue protein sequence, read N- to C-terminus: Annexin A5 (321 aa).

Position 2 is an N-acetylalanine (Ala2). Annexin repeat units follow at residues 15 to 86 (FDER…ALMK), 87 to 158 (PSRL…VLLQ), 170 to 242 (AQVE…AVVK), and 246 to 317 (SIPA…LLCG). Residue Lys29 forms a Glycyl lysine isopeptide (Lys-Gly) (interchain with G-Cter in SUMO1); alternate linkage. Residue Lys29 forms a Glycyl lysine isopeptide (Lys-Gly) (interchain with G-Cter in SUMO2); alternate linkage. N6-acetyllysine occurs at positions 70, 76, 79, 97, and 101. N6-succinyllysine is present on Lys290. The [IL]-x-C-x-x-[DE] motif signature appears at 314–320 (LLCGGED).

This sequence belongs to the annexin family. As to quaternary structure, monomer. Binds ATRX and EIF5B. In terms of processing, S-nitrosylation is induced by interferon-gamma and oxidatively-modified low-densitity lipoprotein (LDL(ox)) possibly implicating the iNOS-S100A8/9 transnitrosylase complex.

Functionally, this protein is an anticoagulant protein that acts as an indirect inhibitor of the thromboplastin-specific complex, which is involved in the blood coagulation cascade. This chain is Annexin A5 (ANXA5), found in Bos taurus (Bovine).